The following is a 120-amino-acid chain: Large ribosomal subunit protein uL18 (120 aa).

Belongs to the universal ribosomal protein uL18 family. Part of the 50S ribosomal subunit; part of the 5S rRNA/L5/L18/L25 subcomplex. Contacts the 5S and 23S rRNAs.

This is one of the proteins that bind and probably mediate the attachment of the 5S RNA into the large ribosomal subunit, where it forms part of the central protuberance. This is Large ribosomal subunit protein uL18 from Maricaulis maris (strain MCS10) (Caulobacter maris).